The sequence spans 185 residues: Dioxygenase easH (185 aa).

Positions 17, 19, and 93 each coordinate Fe cation.

This sequence belongs to the PhyH family. As to quaternary structure, homodimer. Fe cation is required as a cofactor.

Its pathway is alkaloid biosynthesis; ergot alkaloid biosynthesis. In terms of biological role, dioxygenase; part of the gene cluster that mediates the biosynthesis of fungal ergot alkaloid ergovaline, the predominant ergopeptine product in E.festucae var. lolii. DmaW catalyzes the first step of ergot alkaloid biosynthesis by condensing dimethylallyl diphosphate (DMAP) and tryptophan to form 4-dimethylallyl-L-tryptophan. The second step is catalyzed by the methyltransferase easF that methylates 4-dimethylallyl-L-tryptophan in the presence of S-adenosyl-L-methionine, resulting in the formation of 4-dimethylallyl-L-abrine. The catalase easC and the FAD-dependent oxidoreductase easE then transform 4-dimethylallyl-L-abrine to chanoclavine-I which is further oxidized by easD in the presence of NAD(+), resulting in the formation of chanoclavine-I aldehyde. Agroclavine dehydrogenase easG then mediates the conversion of chanoclavine-I aldehyde to agroclavine via a non-enzymatic adduct reaction: the substrate is an iminium intermediate that is formed spontaneously from chanoclavine-I aldehyde in the presence of glutathione. The presence of easA is not required to complete this reaction. Further conversion of agroclavine to paspalic acid is a two-step process involving oxidation of agroclavine to elymoclavine and of elymoclavine to paspalic acid, the second step being performed by the elymoclavine oxidase cloA. Paspalic acid is then further converted to D-lysergic acid. Ergovaline is assembled from D-lysergic acid and three different amino acids by the D-lysergyl-peptide-synthetase composed of a monomudular (lpsB) and a trimodular (lpsA) nonribosomal peptide synthetase subunit. The chain is Dioxygenase easH from Epichloe festucae var. lolii (Neotyphodium lolii).